The sequence spans 478 residues: tRNA(Ile)-lysidine synthase (478 aa).

An ATP-binding site is contributed by 27–32 (SGGSDS).

Belongs to the tRNA(Ile)-lysidine synthase family.

It localises to the cytoplasm. The catalysed reaction is cytidine(34) in tRNA(Ile2) + L-lysine + ATP = lysidine(34) in tRNA(Ile2) + AMP + diphosphate + H(+). Its function is as follows. Ligates lysine onto the cytidine present at position 34 of the AUA codon-specific tRNA(Ile) that contains the anticodon CAU, in an ATP-dependent manner. Cytidine is converted to lysidine, thus changing the amino acid specificity of the tRNA from methionine to isoleucine. The chain is tRNA(Ile)-lysidine synthase from Rickettsia conorii (strain ATCC VR-613 / Malish 7).